Consider the following 193-residue polypeptide: Interleukin-18 (193 aa).

A propeptide spanning residues 1-36 (MAAEPVEDNCINFVAMKFIDNTLYFIAEDDENLESD) is cleaved from the precursor.

It belongs to the IL-1 family. As to quaternary structure, forms a ternary complex with ligand-binding receptor subunit IL18R1 and signaling receptor subunit IL18RAP at the plasma membrane. Mature IL18 first binds to IL18R1 forming a low affinity binary complex, which then interacts with IL18RAP to form a high affinity ternary complex that signals inside the cell. Interacts with cargo receptor TMED10; the interaction mediates the translocation from the cytoplasm into the ERGIC (endoplasmic reticulum-Golgi intermediate compartment) and thereby secretion. The pro-IL-18 precursor is processed by CASP1, CASP4 or CASP5 to yield its mature, active form. The pro-IL-18 precursor features autoinhibitory interactions between the propeptide and the post-cleavage-site region, preventing recognition by the IL18R1 receptor. Processing by CASP1, CASP4 or CASP5 induces conformational changes to generate critical receptor-binding sites. The mature form is then secreted and released in the extracellular milieu by passing through the gasdermin-D (GSDMD) pore. In contrast, cleavage by CASP3 inactivates IL18. As to expression, expressed in ovarian carcinoma but undetectable in normal ovarian epithelial cells. Resistant to proteolytic activation by caspase-1 and -4.

The protein localises to the cytoplasm. Its subcellular location is the cytosol. It localises to the secreted. Functionally, pro-inflammatory cytokine primarily involved in epithelial barrier repair, polarized T-helper 1 (Th1) cell and natural killer (NK) cell immune responses. Upon binding to IL18R1 and IL18RAP, forms a signaling ternary complex which activates NF-kappa-B, triggering synthesis of inflammatory mediators. Synergizes with IL12/interleukin-12 to induce IFNG synthesis from T-helper 1 (Th1) cells and natural killer (NK) cells. Involved in transduction of inflammation downstream of pyroptosis: its mature form is specifically released in the extracellular milieu by passing through the gasdermin-D (GSDMD) pore. The sequence is that of Interleukin-18 from Homo sapiens (Human).